A 365-amino-acid polypeptide reads, in one-letter code: Peptide chain release factor 2 (365 aa).

Position 252 is an N5-methylglutamine (glutamine 252).

It belongs to the prokaryotic/mitochondrial release factor family. In terms of processing, methylated by PrmC. Methylation increases the termination efficiency of RF2.

It is found in the cytoplasm. Peptide chain release factor 2 directs the termination of translation in response to the peptide chain termination codons UGA and UAA. This is Peptide chain release factor 2 from Shigella flexneri.